Consider the following 548-residue polypeptide: Probable malate:quinone oxidoreductase (548 aa).

A disordered region spans residues 522 to 548; it reads KPQAADSTPKPQLKPKPVQKEVADIAL. The segment covering 539–548 has biased composition (basic and acidic residues); sequence VQKEVADIAL.

This sequence belongs to the MQO family. Requires FAD as cofactor.

It carries out the reaction (S)-malate + a quinone = a quinol + oxaloacetate. The protein operates within carbohydrate metabolism; tricarboxylic acid cycle; oxaloacetate from (S)-malate (quinone route): step 1/1. In Escherichia coli O9:H4 (strain HS), this protein is Probable malate:quinone oxidoreductase.